The chain runs to 337 residues: Anthranilate phosphoribosyltransferase (337 aa).

5-phospho-alpha-D-ribose 1-diphosphate-binding positions include Gly78, Gly81–Asp82, Thr86, Asn88–Thr91, Lys106–Ser114, and Ser118. Residue Gly78 coordinates anthranilate. Ser90 serves as a coordination point for Mg(2+). Position 109 (Asn109) interacts with anthranilate. Position 164 (Arg164) interacts with anthranilate. Mg(2+) contacts are provided by Asp222 and Glu223.

This sequence belongs to the anthranilate phosphoribosyltransferase family. As to quaternary structure, homodimer. Mg(2+) serves as cofactor.

The enzyme catalyses N-(5-phospho-beta-D-ribosyl)anthranilate + diphosphate = 5-phospho-alpha-D-ribose 1-diphosphate + anthranilate. The protein operates within amino-acid biosynthesis; L-tryptophan biosynthesis; L-tryptophan from chorismate: step 2/5. Its function is as follows. Catalyzes the transfer of the phosphoribosyl group of 5-phosphorylribose-1-pyrophosphate (PRPP) to anthranilate to yield N-(5'-phosphoribosyl)-anthranilate (PRA). The sequence is that of Anthranilate phosphoribosyltransferase from Idiomarina loihiensis (strain ATCC BAA-735 / DSM 15497 / L2-TR).